The following is a 307-amino-acid chain: MSNAPLVHLSDLQKRLRVFAVWEKVRNDGKVHWAIECFAEMFGVFLYVYFGLGSTAGWVIGNIIKETNLSSILQIGLAYAFGIWFAIGLCSSSSGGHFNPCVTLSFVVFKGFPKLKACRYIIAQILGAYIASALVYSQWNVLIEECTLGLIKAKAYDTTMFTPNGPAGIFALYLVPGAQSVPRALLNEFVNSTLIGMIIWAALDPTNMMVPPAMGPLFISLAYAAVIWGFATPAVALNTARDLGARLFAMSIWGTKAAGSGYSAIACLINIPATLLGVFLYEVFFTDSDRGKLLPILNGKKLKHIFS.

Over 1-40 (MSNAPLVHLSDLQKRLRVFAVWEKVRNDGKVHWAIECFAE) the chain is Cytoplasmic. The helical transmembrane segment at 41-61 (MFGVFLYVYFGLGSTAGWVIG) threads the bilayer. The Extracellular portion of the chain corresponds to 62–68 (NIIKETN). Residues 69 to 89 (LSSILQIGLAYAFGIWFAIGL) form a helical membrane-spanning segment. Topologically, residues 90–120 (CSSSSGGHFNPCVTLSFVVFKGFPKLKACRY) are cytoplasmic. The NPA 1 signature appears at 99–101 (NPC). The chain crosses the membrane as a helical span at residues 121-141 (IIAQILGAYIASALVYSQWNV). Residues 142–157 (LIEECTLGLIKAKAYD) lie on the Extracellular side of the membrane. The chain crosses the membrane as a helical span at residues 158 to 178 (TTMFTPNGPAGIFALYLVPGA). An NPA 2 motif is present at residues 167-169 (AGI). Topologically, residues 179–183 (QSVPR) are cytoplasmic. A helical transmembrane segment spans residues 184–203 (ALLNEFVNSTLIGMIIWAAL). The Extracellular portion of the chain corresponds to 204 to 216 (DPTNMMVPPAMGP). Residues 217-237 (LFISLAYAAVIWGFATPAVAL) traverse the membrane as a helical segment. The Cytoplasmic segment spans residues 238 to 264 (NTARDLGARLFAMSIWGTKAAGSGYSA). A helical transmembrane segment spans residues 265–285 (IACLINIPATLLGVFLYEVFF). Residues 286-307 (TDSDRGKLLPILNGKKLKHIFS) are Extracellular-facing.

This sequence belongs to the MIP/aquaporin (TC 1.A.8) family.

The protein resides in the membrane. The enzyme catalyses H2O(in) = H2O(out). The catalysed reaction is NH4(+)(in) = NH4(+)(out). It carries out the reaction urea(in) = urea(out). It catalyses the reaction glycerol(in) = glycerol(out). Its function is as follows. Water channel required to facilitate the transport of water across membranes. In addition to water, also shows strong ammonium transport activity. Also enables low but statistically significant glycerol and urea permeability. May be involved in fungal nitrogen (ammonium) support of the plant host in symbiosis. The sequence is that of Aquaporin Lacbi1:387054 from Laccaria bicolor (strain S238N-H82 / ATCC MYA-4686) (Bicoloured deceiver).